Reading from the N-terminus, the 476-residue chain is Ribosomal RNA small subunit methyltransferase F (476 aa).

S-adenosyl-L-methionine contacts are provided by residues 124–130 (ASAPGSK), Glu-148, Asp-175, and Asp-193. The active-site Nucleophile is Cys-246.

Belongs to the class I-like SAM-binding methyltransferase superfamily. RsmB/NOP family.

Its subcellular location is the cytoplasm. The enzyme catalyses cytidine(1407) in 16S rRNA + S-adenosyl-L-methionine = 5-methylcytidine(1407) in 16S rRNA + S-adenosyl-L-homocysteine + H(+). In terms of biological role, specifically methylates the cytosine at position 1407 (m5C1407) of 16S rRNA. In Photobacterium profundum (strain SS9), this protein is Ribosomal RNA small subunit methyltransferase F.